Reading from the N-terminus, the 310-residue chain is p-hydroxybenzoic acid efflux pump subunit AaeA (310 aa).

A helical membrane pass occupies residues 12–32; that stretch reads AITVVLVILAFIAIFNAWVYY.

It belongs to the membrane fusion protein (MFP) (TC 8.A.1) family.

Its subcellular location is the cell inner membrane. In terms of biological role, forms an efflux pump with AaeB. The protein is p-hydroxybenzoic acid efflux pump subunit AaeA of Escherichia coli O8 (strain IAI1).